A 418-amino-acid polypeptide reads, in one-letter code: Tektin-1 (418 aa).

Coiled coils occupy residues K21–E107, H134–D177, N266–G308, and A333–Y384.

The protein belongs to the tektin family. Microtubule inner protein component of sperm flagellar doublet microtubules. Post-translationally, ubiquitinated, leading to its degradation. Deubiquitinated by USP16, promoting its stability. In terms of tissue distribution, predominantly expressed in testis. Expressed in airway epithelial cells.

Its subcellular location is the cytoplasm. It is found in the cytoskeleton. It localises to the cilium axoneme. The protein resides in the flagellum axoneme. Functionally, microtubule inner protein (MIP) part of the dynein-decorated doublet microtubules (DMTs) in cilia and flagellar axoneme. Forms filamentous polymers in the walls of ciliary and flagellar microtubules. The protein is Tektin-1 (TEKT1) of Homo sapiens (Human).